The sequence spans 457 residues: Argininosuccinate lyase (457 aa).

The protein belongs to the lyase 1 family. Argininosuccinate lyase subfamily.

It is found in the cytoplasm. It catalyses the reaction 2-(N(omega)-L-arginino)succinate = fumarate + L-arginine. The protein operates within amino-acid biosynthesis; L-arginine biosynthesis; L-arginine from L-ornithine and carbamoyl phosphate: step 3/3. The polypeptide is Argininosuccinate lyase (Haemophilus influenzae (strain ATCC 51907 / DSM 11121 / KW20 / Rd)).